The following is a 396-amino-acid chain: Putative carbamoyltransferase YgeW (396 aa).

Residues 71–74 (STRT), Gln-98, 165–168 (HPTQ), and 330–331 (CL) contribute to the carbamoyl phosphate site.

Belongs to the aspartate/ornithine carbamoyltransferase superfamily. In terms of assembly, homotrimer.

The polypeptide is Putative carbamoyltransferase YgeW (ygeW) (Escherichia coli O157:H7).